Consider the following 423-residue polypeptide: Putative competence-damage inducible protein (423 aa).

Belongs to the CinA family.

The chain is Putative competence-damage inducible protein from Streptococcus thermophilus (strain ATCC BAA-491 / LMD-9).